The sequence spans 216 residues: Peptide methionine sulfoxide reductase MsrA (216 aa).

C58 is an active-site residue.

Belongs to the MsrA Met sulfoxide reductase family.

It carries out the reaction L-methionyl-[protein] + [thioredoxin]-disulfide + H2O = L-methionyl-(S)-S-oxide-[protein] + [thioredoxin]-dithiol. It catalyses the reaction [thioredoxin]-disulfide + L-methionine + H2O = L-methionine (S)-S-oxide + [thioredoxin]-dithiol. Functionally, has an important function as a repair enzyme for proteins that have been inactivated by oxidation. Catalyzes the reversible oxidation-reduction of methionine sulfoxide in proteins to methionine. This Azotobacter vinelandii (strain DJ / ATCC BAA-1303) protein is Peptide methionine sulfoxide reductase MsrA.